The primary structure comprises 466 residues: Glycine--tRNA ligase (466 aa).

Arginine 105 and glutamate 168 together coordinate substrate. ATP contacts are provided by residues 200–202 (RNE), 210–215 (FRTREF), 287–288 (EL), and 331–334 (GLTR). 215–219 (FEQME) lines the substrate pocket. 327 to 331 (EPAAG) lines the substrate pocket.

The protein belongs to the class-II aminoacyl-tRNA synthetase family. As to quaternary structure, homodimer.

Its subcellular location is the cytoplasm. It catalyses the reaction tRNA(Gly) + glycine + ATP = glycyl-tRNA(Gly) + AMP + diphosphate. Catalyzes the attachment of glycine to tRNA(Gly). This chain is Glycine--tRNA ligase, found in Nocardia farcinica (strain IFM 10152).